The following is a 363-amino-acid chain: Aspartate carbamoyltransferase, chloroplastic (363 aa).

Residues 1 to 21 (MAAARATLPLPRVPAPSPRPQ) are disordered. Residues 1-36 (MAAARATLPLPRVPAPSPRPQLRPFPSLPARRGAVA) constitute a chloroplast transit peptide. Pro residues predominate over residues 11–21 (PRVPAPSPRPQ). Residues Arg-109 and Thr-110 each contribute to the carbamoyl phosphate site. UMP contacts are provided by Arg-109 and Thr-110. Position 139 (Lys-139) interacts with L-aspartate. Residues Arg-160, His-188, and Gln-191 each contribute to the carbamoyl phosphate site. Arg-160 and His-188 together coordinate UMP. Arg-221 and Arg-283 together coordinate UMP. L-aspartate contacts are provided by Arg-221 and Arg-283. Residues Leu-323 and Pro-324 each contribute to the carbamoyl phosphate site.

Belongs to the aspartate/ornithine carbamoyltransferase superfamily. ATCase family. As to quaternary structure, homotrimer.

The protein resides in the plastid. It is found in the chloroplast. The enzyme catalyses carbamoyl phosphate + L-aspartate = N-carbamoyl-L-aspartate + phosphate + H(+). The protein operates within pyrimidine metabolism; UMP biosynthesis via de novo pathway; (S)-dihydroorotate from bicarbonate: step 2/3. With respect to regulation, feedback inhibited by UMP. In terms of biological role, catalyzes the condensation of carbamoyl phosphate and aspartate to form carbamoyl aspartate and inorganic phosphate, the committed step in the de novo pyrimidine nucleotide biosynthesis pathway. The sequence is that of Aspartate carbamoyltransferase, chloroplastic (PYRB) from Oryza sativa subsp. japonica (Rice).